Here is a 135-residue protein sequence, read N- to C-terminus: MVLAASVVQEVANVPFAHEVAGLVQPVAEAQNVLGLIPMSHGLILAGILFAIGLCGVMVRRNFLFMLMSLEIMMNAAALAFVVAGSRWVDPDGQIMFIFILTLAAAEAAIGLAILLRFYHQRGHLDVDSANEMKG.

A run of 3 helical transmembrane segments spans residues 33-53, 63-83, and 95-115; these read VLGLIPMSHGLILAGILFAIG, FLFMLMSLEIMMNAAALAFVV, and IMFIFILTLAAAEAAIGLAIL.

It belongs to the complex I subunit 4L family. NDH-1 is composed of 14 different subunits. Subunits NuoA, H, J, K, L, M, N constitute the membrane sector of the complex.

It is found in the cell inner membrane. The enzyme catalyses a quinone + NADH + 5 H(+)(in) = a quinol + NAD(+) + 4 H(+)(out). Functionally, NDH-1 shuttles electrons from NADH, via FMN and iron-sulfur (Fe-S) centers, to quinones in the respiratory chain. The immediate electron acceptor for the enzyme in this species is believed to be ubiquinone. Couples the redox reaction to proton translocation (for every two electrons transferred, four hydrogen ions are translocated across the cytoplasmic membrane), and thus conserves the redox energy in a proton gradient. The polypeptide is NADH-quinone oxidoreductase subunit K (Psychrobacter cryohalolentis (strain ATCC BAA-1226 / DSM 17306 / VKM B-2378 / K5)).